We begin with the raw amino-acid sequence, 500 residues long: MQTKGGQTWARRALLLGILWATAHLPLSGTSLPQRLPRATGNSTQCVISPSSEFPEGFFTRQERRDGGIIIYFLIIVYMFMAISIVCDEYFLPSLEIISESLGLSQDVAGTTFMAAGSSAPELVTAFLGVFITKGDIGISTILGSAIYNLLGICAACGLLSNTVSTLSCWPLFRDCAAYTISAAAVLGIIYDNQVYWYEGALLLLIYGLYVLVLCFDIKINQYIIKKCSPCCACLAKAMERSEQQPLMGWEDEGQPFIRRQSRTDSGIFYEDSGYSQLSISLHGLSQVSEDPPSVFNMPEADLKRIFWVLSLPIITLLFLTTPDCRKKFWKNYFVITFFMSAIWISAFTYILVWMVTITGETLEIPDTVMGLTLLAAGTSIPDTIASVLVARKGKGDMAMSNIVGSNVFDMLCLGIPWFIKTAFINGSAPAEVNSRGLTYITISLNISIIFLFLAVHFNGWKLDRKLGIVCLLSYLGLATLSVLYELGIIGNNKIRGCGG.

The signal sequence occupies residues 1–29 (MQTKGGQTWARRALLLGILWATAHLPLSG). The Extracellular segment spans residues 30–66 (TSLPQRLPRATGNSTQCVISPSSEFPEGFFTRQERRD). Residues 67–87 (GGIIIYFLIIVYMFMAISIVC) form a helical membrane-spanning segment. Over 88–111 (DEYFLPSLEIISESLGLSQDVAGT) the chain is Cytoplasmic. Residues 112–132 (TFMAAGSSAPELVTAFLGVFI) traverse the membrane as a helical segment. The Extracellular portion of the chain corresponds to 133–136 (TKGD). The helical transmembrane segment at 137 to 157 (IGISTILGSAIYNLLGICAAC) threads the bilayer. Residues 158-169 (GLLSNTVSTLSC) lie on the Cytoplasmic side of the membrane. A helical transmembrane segment spans residues 170-190 (WPLFRDCAAYTISAAAVLGII). Residues 191 to 195 (YDNQV) lie on the Extracellular side of the membrane. Residues 196-216 (YWYEGALLLLIYGLYVLVLCF) traverse the membrane as a helical segment. Over 217-302 (DIKINQYIIK…PSVFNMPEAD (86 aa)) the chain is Cytoplasmic. The chain crosses the membrane as a helical span at residues 303-323 (LKRIFWVLSLPIITLLFLTTP). The Extracellular portion of the chain corresponds to 324-333 (DCRKKFWKNY). Residues 334 to 354 (FVITFFMSAIWISAFTYILVW) traverse the membrane as a helical segment. The Cytoplasmic portion of the chain corresponds to 355-368 (MVTITGETLEIPDT). A helical transmembrane segment spans residues 369-389 (VMGLTLLAAGTSIPDTIASVL). Residues 390-399 (VARKGKGDMA) are Extracellular-facing. A helical membrane pass occupies residues 400-420 (MSNIVGSNVFDMLCLGIPWFI). The Cytoplasmic segment spans residues 421-437 (KTAFINGSAPAEVNSRG). A helical transmembrane segment spans residues 438–458 (LTYITISLNISIIFLFLAVHF). The Extracellular segment spans residues 459–468 (NGWKLDRKLG). A helical membrane pass occupies residues 469 to 489 (IVCLLSYLGLATLSVLYELGI). At 490–500 (IGNNKIRGCGG) the chain is on the cytoplasmic side.

This sequence belongs to the Ca(2+):cation antiporter (CaCA) (TC 2.A.19) family. SLC24A subfamily.

It localises to the golgi apparatus. The protein resides in the trans-Golgi network membrane. Its subcellular location is the melanosome. The catalysed reaction is Ca(2+)(out) + K(+)(out) + 4 Na(+)(in) = Ca(2+)(in) + K(+)(in) + 4 Na(+)(out). Its function is as follows. Calcium, potassium:sodium antiporter that transports 1 Ca(2+) and 1 K(+) to the melanosome in exchange for 4 cytoplasmic Na(+). Involved in pigmentation, possibly by participating in ion transport in melanosomes. Predominant sodium-calcium exchanger in melanocytes. This is Sodium/potassium/calcium exchanger 5 from Homo sapiens (Human).